Consider the following 673-residue polypeptide: DNA ligase (673 aa).

34–38 (DAAFD) lines the NAD(+) pocket. The segment at 54–73 (LRRPDSPTQRVGGATAPDFA) is disordered. NAD(+) contacts are provided by residues 83 to 84 (SL) and Glu114. The active-site N6-AMP-lysine intermediate is the Lys116. Residues Arg137, Glu176, Lys292, and Lys316 each coordinate NAD(+). 4 residues coordinate Zn(2+): Cys410, Cys413, Cys428, and Cys433. The BRCT domain occupies 594-673 (PAEGPLAGMT…DEFCERYLQG (80 aa)).

Belongs to the NAD-dependent DNA ligase family. LigA subfamily. Requires Mg(2+) as cofactor. Mn(2+) serves as cofactor.

The enzyme catalyses NAD(+) + (deoxyribonucleotide)n-3'-hydroxyl + 5'-phospho-(deoxyribonucleotide)m = (deoxyribonucleotide)n+m + AMP + beta-nicotinamide D-nucleotide.. Its function is as follows. DNA ligase that catalyzes the formation of phosphodiester linkages between 5'-phosphoryl and 3'-hydroxyl groups in double-stranded DNA using NAD as a coenzyme and as the energy source for the reaction. It is essential for DNA replication and repair of damaged DNA. This chain is DNA ligase, found in Symbiobacterium thermophilum (strain DSM 24528 / JCM 14929 / IAM 14863 / T).